Consider the following 179-residue polypeptide: Large ribosomal subunit protein uL5 (179 aa).

It belongs to the universal ribosomal protein uL5 family. In terms of assembly, part of the 50S ribosomal subunit; part of the 5S rRNA/L5/L18/L25 subcomplex. Contacts the 5S rRNA and the P site tRNA. Forms a bridge to the 30S subunit in the 70S ribosome.

Functionally, this is one of the proteins that bind and probably mediate the attachment of the 5S RNA into the large ribosomal subunit, where it forms part of the central protuberance. In the 70S ribosome it contacts protein S13 of the 30S subunit (bridge B1b), connecting the 2 subunits; this bridge is implicated in subunit movement. Contacts the P site tRNA; the 5S rRNA and some of its associated proteins might help stabilize positioning of ribosome-bound tRNAs. This chain is Large ribosomal subunit protein uL5, found in Burkholderia multivorans (strain ATCC 17616 / 249).